The sequence spans 122 residues: Large ribosomal subunit protein uL14c (122 aa).

This sequence belongs to the universal ribosomal protein uL14 family. Part of the 50S ribosomal subunit.

Its subcellular location is the plastid. It localises to the chloroplast. Functionally, binds to 23S rRNA. The polypeptide is Large ribosomal subunit protein uL14c (Cryptomeria japonica (Japanese cedar)).